The chain runs to 141 residues: Cystatin (141 aa).

Positions 1-26 are cleaved as a signal peptide; it reads MVRSQLPVAAPLRLLCALLLLPSATM. Residues 29 to 129 enclose the Cystatin domain; sequence GGLSPRSVTD…CHFQVWSRPW (101 aa). Residues 73–77 carry the Secondary area of contact motif; that stretch reads QVVSG. 2 disulfides stabilise this stretch: cysteine 91/cysteine 107 and cysteine 120/cysteine 140.

The protein belongs to the cystatin family. As to expression, expressed at a low level by the venom gland (at protein level).

The protein localises to the secreted. In terms of biological role, inhibits various C1 cysteine proteases including cathepsin L, papain and cathepsin B. This protein has no toxic activity and its function in the venom is unknown. It may play a role as a housekeeping or regulatory protein. The sequence is that of Cystatin from Micropechis ikaheca (New Guinean small-eyed snake).